Here is a 341-residue protein sequence, read N- to C-terminus: MTLLLAGDIGGTKTILQLVETSDSQGLHTIYQESYHSADFPDLVPIVQQFLIKANTPIPEKACFAIAGPIVKNTAKLTNLAWFLDTERLQQELGIPHIYLINDFAAVGYGISGLQKQDLHPLQVGKPQPETPIGIIGAGTGLGQGFLIKQGNNYQVFPSEGGHADFAPRNEIEFQLLKYLLDKHDIQRISVERVVSGMGIVAIYQFLRDRKFAAESPDIAQIVRTWEQEAGQEEKSVDPGAAIGTAALEKRDRLSEQTLQLFIEAYGAEAGNLALKLLPYGGLYIAGGIAPKILPLIQNSGFLLNFTQKGRMRPLLEEIPVYIILNPQVGLIGAALCAARL.

7–12 (GDIGGT) contributes to the ATP binding site.

This sequence belongs to the bacterial glucokinase family.

It is found in the cytoplasm. The catalysed reaction is D-glucose + ATP = D-glucose 6-phosphate + ADP + H(+). The polypeptide is Glucokinase (Nostoc punctiforme (strain ATCC 29133 / PCC 73102)).